The chain runs to 461 residues: MVSRVQLPPEIQLAQRLAGNEQVTRDRAVRKLRKYIVARTQRAAGGFTHDELLKVWKGLFYCMWMQDKPLLQEELGRTISQLVHAFQTTEAQHLFLQAFWQTMNREWTGIDRLRLDKFYMLMRMVLNESLKVLKMQGWEERQIEELLELLMTEILHPSSQAPNGVKSHFIEIFLEELTKVGAEELTADQNLKFIDPFCRIAARTKDSLVLNNITRGIFETIVEQAPLAIEDLLNELDTQDEEVASDSDESSEGGERGDALSQKRSEKPPAGSICRAEPEAGEEQAGDDRDSGGPVLQFDYEAVANRLFEMASRQSTPSQNRKRLYKVIRKLQDLAGGIFPEDEIPEKACRRLLEGRRQKKTKKQKRLLRLQQERGKGEKEPPSPGMERKRSRRRGVGADPEARAEAGEQPGTAERALLRDQPRGRGQRGARQRRRTPRPLTSARAKAANVQEPEKKKKRRE.

A compositionally biased stretch (acidic residues) spans 239 to 252 (QDEEVASDSDESSE). Disordered regions lie at residues 239–295 (QDEE…GGPV) and 354–461 (EGRR…KRRE). Residues Ser-245, Ser-247, Ser-250, and Ser-251 each carry the phosphoserine modification. The span at 253-267 (GGERGDALSQKRSEK) shows a compositional bias: basic and acidic residues. Basic residues predominate over residues 357–368 (RQKKTKKQKRLL). Residues 371 to 381 (QQERGKGEKEP) show a composition bias toward basic and acidic residues. At Ser-383 the chain carries Phosphoserine. Thr-412 carries the post-translational modification Phosphothreonine. A compositionally biased stretch (basic residues) spans 425-437 (RGQRGARQRRRTP). Position 427 is an N5-methylglutamine (Gln-427).

This sequence belongs to the RRP1 family. As to quaternary structure, interacts with C1QBP. Interacts with RRP1B. In terms of processing, methylated at Gln-427 by N6AMT1. Ubiquitously expressed in fetal and adult tissues.

The protein resides in the nucleus. The protein localises to the nucleolus. In terms of biological role, plays a critical role in the generation of 28S rRNA. This is Ribosomal RNA processing protein 1 homolog A (RRP1) from Homo sapiens (Human).